We begin with the raw amino-acid sequence, 400 residues long: MAKQKFERNKPHINIGTIGHVDHGKTTLTAAITKTMALRGRAEFRAFDQIDNAPEERARGITISISHVEYETENRHYAHVDCPGHADYIKNMITGAAQMDGAILVVSAPDGPMPQTREHILLAGQVEVPAMVVFLNKVDMMDDPELLELVEMELRELLTKYGFPGDEIPIVRGSAKGALDSASTDASQPEYQSIQELMQAVDDYIPTPERAIDKPFLMPIEDVFSIKGRGTVVTGRIERGIVKVGDTIEIIGMGPDVRTTAVTGVEMFKKLLDEGRAGDNVGALLRGIERTDVERGQVLAKPGSIKPHTKFKAEVYVLKKEEGGRHSPFFSGYRPQFYVRTTDVTGAIGLPEGVEMVMPGDNIQMTVELIVPVAIEQGLKFAIREGGRTVGAGIVPEIIA.

A tr-type G domain is found at 10 to 209; sequence KPHINIGTIG…AVDDYIPTPE (200 aa). The G1 stretch occupies residues 19-26; the sequence is GHVDHGKT. 19–26 is a GTP binding site; it reads GHVDHGKT. Thr-26 provides a ligand contact to Mg(2+). The G2 stretch occupies residues 60 to 64; it reads GITIS. The segment at 81–84 is G3; the sequence is DCPG. Residues 81–85 and 136–139 contribute to the GTP site; these read DCPGH and NKVD. The tract at residues 136–139 is G4; it reads NKVD. A G5 region spans residues 174-176; the sequence is SAK.

The protein belongs to the TRAFAC class translation factor GTPase superfamily. Classic translation factor GTPase family. EF-Tu/EF-1A subfamily. As to quaternary structure, monomer.

Its subcellular location is the cytoplasm. The catalysed reaction is GTP + H2O = GDP + phosphate + H(+). Its function is as follows. GTP hydrolase that promotes the GTP-dependent binding of aminoacyl-tRNA to the A-site of ribosomes during protein biosynthesis. The chain is Elongation factor Tu from Herpetosiphon aurantiacus (Herpetosiphon giganteus).